A 415-amino-acid polypeptide reads, in one-letter code: Probable N-acetyl-gamma-glutamyl-phosphate reductase, chloroplastic (415 aa).

Residues 1 to 74 (MGSTALGGGA…SGVKSGEEVR (74 aa)) constitute a chloroplast transit peptide. The tract at residues 48–68 (VRASVASSPQKQHSPKTSGVK) is disordered. Residues 56 to 67 (PQKQHSPKTSGV) are compositionally biased toward polar residues. Cysteine 219 is an active-site residue.

Belongs to the NAGSA dehydrogenase family. Type 1 subfamily. As to quaternary structure, homotetramer.

The protein localises to the plastid. It is found in the chloroplast. The catalysed reaction is N-acetyl-L-glutamate 5-semialdehyde + phosphate + NADP(+) = N-acetyl-L-glutamyl 5-phosphate + NADPH + H(+). It participates in amino-acid biosynthesis; L-arginine biosynthesis; N(2)-acetyl-L-ornithine from L-glutamate: step 3/4. This is Probable N-acetyl-gamma-glutamyl-phosphate reductase, chloroplastic from Oryza sativa subsp. japonica (Rice).